A 60-amino-acid chain; its full sequence is HLLQFGDLINKIARRNGILYYSFYGCYCGLGGRGRPQDATDRCCFVHDCCYGKVTGCDPK.

Y27, G29, and G31 together coordinate Ca(2+). C28 and C44 form a disulfide bridge. Residue H47 is part of the active site. D48 lines the Ca(2+) pocket.

Requires Ca(2+) as cofactor. In terms of tissue distribution, expressed by the venom gland.

Its subcellular location is the secreted. It catalyses the reaction a 1,2-diacyl-sn-glycero-3-phosphocholine + H2O = a 1-acyl-sn-glycero-3-phosphocholine + a fatty acid + H(+). In terms of biological role, snake venom phospholipase A2 (PLA2) that displays mild but significant inhibition of mouse platelet aggregation induced by ADP and collagen. In vivo, induces edema in the foot pads and gastrocnemius muscles of mice but shows no myonecrotic or myotoxic activity. PA2 catalyzes the calcium-dependent hydrolysis of the 2-acyl groups in 3-sn-phosphoglycerides. This is Phospholipase A2 from Lachesis muta rhombeata (Bushmaster).